Reading from the N-terminus, the 251-residue chain is MSTIEDLKATVERLAARVHELEASAKSKIAPEVPKSIRMVLIGPPGAGKGTQAPNLVEKYCACHLATGDMLRSQVQQQTPLGVEAKKIMDAGGLVSDDIMVNMIRSELENNSKCKNGFILDGFPRTIPQAEKLDEMLAEKKQPLEKAVELKIPDDLLVARITGRLVHPASGRSYHKVFNPPKKEMIDDITGEALVQRSDDNADALKKRLVSFHKQTEPIVGYYQKTGIWKGVDAAQDPKKVWGDILKCLGQ.

Residue 46–51 (GAGKGT) coordinates ATP. The NMP stretch occupies residues 66–95 (ATGDMLRSQVQQQTPLGVEAKKIMDAGGLV). Residues Thr67, Arg72, 93–95 (GLV), 122–125 (GFPR), and Gln129 contribute to the AMP site. Residues 163–200 (GRLVHPASGRSYHKVFNPPKKEMIDDITGEALVQRSDD) form an LID region. ATP-binding positions include Arg164 and 173 to 174 (SY). Positions 197 and 208 each coordinate AMP. An ATP-binding site is contributed by Gln236.

This sequence belongs to the adenylate kinase family. AK2 subfamily. In terms of assembly, monomer.

Its subcellular location is the cytoplasm. The protein localises to the cytosol. The protein resides in the mitochondrion intermembrane space. The enzyme catalyses AMP + ATP = 2 ADP. Catalyzes the reversible transfer of the terminal phosphate group between ATP and AMP. Plays an important role in cellular energy homeostasis and in adenine nucleotide metabolism. Adenylate kinase activity is critical for regulation of the phosphate utilization and the AMP de novo biosynthesis pathways. This is Adenylate kinase from Yarrowia lipolytica (strain CLIB 122 / E 150) (Yeast).